A 561-amino-acid polypeptide reads, in one-letter code: Oligo-1,6-glucosidase (561 aa).

The Nucleophile role is filled by Asp199. Glu256 functions as the Proton donor in the catalytic mechanism.

This sequence belongs to the glycosyl hydrolase 13 family.

It is found in the cytoplasm. It catalyses the reaction Hydrolysis of (1-&gt;6)-alpha-D-glucosidic linkages in some oligosaccharides produced from starch and glycogen by alpha-amylase, and in isomaltose.. This is Oligo-1,6-glucosidase (malL) from Halalkalibacterium halodurans (strain ATCC BAA-125 / DSM 18197 / FERM 7344 / JCM 9153 / C-125) (Bacillus halodurans).